A 380-amino-acid chain; its full sequence is MSEGGSDVSSLSCSLSLDSDSCEDEFYETNLNKLIENTSLNWIFVGGKGGVGKTTTSCSIAIQLAKKRESVLLLSTDPAHNTSDAFNQKFTNKPTLINSFDNLYCMEIDTTFSEDTAFKINQSNFLNSIIPELLQSFPGIDEALCFAELMQSIKNMKYSVIVFDTAPTGHTLRLLAFPDLLKKALGYLINLKEKLKGTLNMLQSLTNNEMEFEGMYDKINHLNTMSISIQENFQNPLKTTFVCVCIPEFLSVYETERLIQELTKKNISCYNIVVNQVVFPLICPDANIEKCENLLKQIKDTNIQDSFNTLILKAKELEDVYISRRKLQSKYLTQIKNLYGNYFHIVCMPQLKTEIRGLDKISNFSEMLLQSKDIPIYSPQ.

An ATP-binding site is contributed by 48–55; the sequence is KGGVGKTT. Aspartate 77 is an active-site residue. The ATP site is built by glutamate 248 and asparagine 275.

Belongs to the arsA ATPase family. As to quaternary structure, homodimer.

It localises to the cytoplasm. It is found in the endoplasmic reticulum. Its function is as follows. ATPase required for the post-translational delivery of tail-anchored (TA) proteins to the endoplasmic reticulum. Recognizes and selectively binds the transmembrane domain of TA proteins in the cytosol. This complex then targets to the endoplasmic reticulum by membrane-bound receptors, where the tail-anchored protein is released for insertion. This process is regulated by ATP binding and hydrolysis. ATP binding drives the homodimer towards the closed dimer state, facilitating recognition of newly synthesized TA membrane proteins. ATP hydrolysis is required for insertion. Subsequently, the homodimer reverts towards the open dimer state, lowering its affinity for the membrane-bound receptor, and returning it to the cytosol to initiate a new round of targeting. The chain is ATPase ASNA1 homolog from Plasmodium yoelii yoelii.